The chain runs to 64 residues: Large ribosomal subunit protein bL33 (64 aa).

The protein belongs to the bacterial ribosomal protein bL33 family.

The polypeptide is Large ribosomal subunit protein bL33 (Thermosynechococcus vestitus (strain NIES-2133 / IAM M-273 / BP-1)).